Here is a 45-residue protein sequence, read N- to C-terminus: Large ribosomal subunit protein bL34 (45 aa).

The interval 1–45 (MTKRTFGGTSRKRKRVSGFRVRMRTHTGRSVIRSRRKKGRSRIAV) is disordered. Basic residues predominate over residues 10–45 (SRKRKRVSGFRVRMRTHTGRSVIRSRRKKGRSRIAV).

It belongs to the bacterial ribosomal protein bL34 family.

The sequence is that of Large ribosomal subunit protein bL34 from Prochlorococcus marinus (strain SARG / CCMP1375 / SS120).